A 163-amino-acid polypeptide reads, in one-letter code: MASLSGSISSLFLKEFVGAFFLSMRYFFRQKATINYPFEKGPVSPRFRGEHALRRYPNGEERCIACKLCEAICPAQAITIEAGPRRNDGTRRTVRYDIDMVKCIYCGFCQEACPVDAIVEGPNFEFATETREELYFDKARLLDNGDRWEREIARNIAIDSPYR.

4Fe-4S ferredoxin-type domains are found at residues 53-83 and 94-123; these read LRRY…IEAG and VRYD…EGPN. Residues C63, C66, C69, C73, C103, C106, C109, and C113 each contribute to the [4Fe-4S] cluster site.

Belongs to the complex I 23 kDa subunit family. NDH-1 is composed of 14 different subunits. Subunits NuoA, H, J, K, L, M, N constitute the membrane sector of the complex. Requires [4Fe-4S] cluster as cofactor.

The protein localises to the cell inner membrane. It catalyses the reaction a quinone + NADH + 5 H(+)(in) = a quinol + NAD(+) + 4 H(+)(out). Its function is as follows. NDH-1 shuttles electrons from NADH, via FMN and iron-sulfur (Fe-S) centers, to quinones in the respiratory chain. The immediate electron acceptor for the enzyme in this species is believed to be ubiquinone. Couples the redox reaction to proton translocation (for every two electrons transferred, four hydrogen ions are translocated across the cytoplasmic membrane), and thus conserves the redox energy in a proton gradient. The protein is NADH-quinone oxidoreductase subunit I of Rhizobium johnstonii (strain DSM 114642 / LMG 32736 / 3841) (Rhizobium leguminosarum bv. viciae).